The chain runs to 421 residues: Tyrosine--tRNA ligase (421 aa).

Tyr38 serves as a coordination point for L-tyrosine. Positions 43 to 52 match the 'HIGH' region motif; that stretch reads PTGDSLHIGH. L-tyrosine is bound by residues Tyr169 and Gln173. The 'KMSKS' region motif lies at 231–235; the sequence is KFGKS. Position 234 (Lys234) interacts with ATP. Residues 353–419 form the S4 RNA-binding domain; that stretch reads KNLVDFLVDT…GKKKYTLVHI (67 aa).

This sequence belongs to the class-I aminoacyl-tRNA synthetase family. TyrS type 1 subfamily. As to quaternary structure, homodimer.

Its subcellular location is the cytoplasm. It carries out the reaction tRNA(Tyr) + L-tyrosine + ATP = L-tyrosyl-tRNA(Tyr) + AMP + diphosphate + H(+). Catalyzes the attachment of tyrosine to tRNA(Tyr) in a two-step reaction: tyrosine is first activated by ATP to form Tyr-AMP and then transferred to the acceptor end of tRNA(Tyr). The sequence is that of Tyrosine--tRNA ligase from Lactobacillus delbrueckii subsp. bulgaricus (strain ATCC 11842 / DSM 20081 / BCRC 10696 / JCM 1002 / NBRC 13953 / NCIMB 11778 / NCTC 12712 / WDCM 00102 / Lb 14).